A 507-amino-acid polypeptide reads, in one-letter code: ATP synthase subunit alpha (507 aa).

An ATP-binding site is contributed by 168-175; the sequence is GDRQTGKT.

It belongs to the ATPase alpha/beta chains family. As to quaternary structure, F-type ATPases have 2 components, CF(1) - the catalytic core - and CF(0) - the membrane proton channel. CF(1) has five subunits: alpha(3), beta(3), gamma(1), delta(1), epsilon(1). CF(0) has three main subunits: a(1), b(2) and c(9-12). The alpha and beta chains form an alternating ring which encloses part of the gamma chain. CF(1) is attached to CF(0) by a central stalk formed by the gamma and epsilon chains, while a peripheral stalk is formed by the delta and b chains.

It is found in the cell membrane. The catalysed reaction is ATP + H2O + 4 H(+)(in) = ADP + phosphate + 5 H(+)(out). Its function is as follows. Produces ATP from ADP in the presence of a proton gradient across the membrane. The alpha chain is a regulatory subunit. In Mesomycoplasma hyopneumoniae (strain 232) (Mycoplasma hyopneumoniae), this protein is ATP synthase subunit alpha.